Here is a 422-residue protein sequence, read N- to C-terminus: UPF0597 protein Kole_0595 (422 aa).

Belongs to the UPF0597 family.

This is UPF0597 protein Kole_0595 from Kosmotoga olearia (strain ATCC BAA-1733 / DSM 21960 / TBF 19.5.1).